The primary structure comprises 428 residues: C4-dicarboxylate transport protein (428 aa).

A run of 8 helical transmembrane segments spans residues Val-8–Pro-28, Leu-44–Met-64, Leu-78–Ile-98, Gly-148–Gly-168, Val-184–Met-204, Leu-222–Ala-242, Ile-307–Met-327, and Ala-355–Ile-375.

Belongs to the dicarboxylate/amino acid:cation symporter (DAACS) (TC 2.A.23) family.

The protein resides in the cell inner membrane. Its function is as follows. Responsible for the transport of dicarboxylates such as succinate, fumarate, and malate from the periplasm across the membrane. This chain is C4-dicarboxylate transport protein, found in Burkholderia mallei (strain ATCC 23344).